The following is a 128-amino-acid chain: Azurin (128 aa).

A Plastocyanin-like domain is found at 1 to 128 (AECKVDVDST…SMMKGAVVLK (128 aa)). Cys3 and Cys26 are disulfide-bonded. Positions 46, 112, 117, and 121 each coordinate Cu cation.

The protein resides in the periplasm. Its function is as follows. Transfers electrons from cytochrome c551 to cytochrome oxidase. The protein is Azurin of Pseudomonas chlororaphis (Pseudomonas aureofaciens).